Here is a 351-residue protein sequence, read N- to C-terminus: Anthranilate phosphoribosyltransferase (351 aa).

5-phospho-alpha-D-ribose 1-diphosphate-binding positions include G92, 95 to 96, T100, 102 to 105, 120 to 128, and S132; these read GD, NIST, and KHGNRAASS. G92 lines the anthranilate pocket. Mg(2+) is bound at residue S104. Anthranilate is bound at residue N123. R178 provides a ligand contact to anthranilate. The Mg(2+) site is built by D236 and E237.

This sequence belongs to the anthranilate phosphoribosyltransferase family. In terms of assembly, homodimer. Mg(2+) serves as cofactor.

It carries out the reaction N-(5-phospho-beta-D-ribosyl)anthranilate + diphosphate = 5-phospho-alpha-D-ribose 1-diphosphate + anthranilate. The protein operates within amino-acid biosynthesis; L-tryptophan biosynthesis; L-tryptophan from chorismate: step 2/5. Functionally, catalyzes the transfer of the phosphoribosyl group of 5-phosphorylribose-1-pyrophosphate (PRPP) to anthranilate to yield N-(5'-phosphoribosyl)-anthranilate (PRA). This is Anthranilate phosphoribosyltransferase from Deinococcus geothermalis (strain DSM 11300 / CIP 105573 / AG-3a).